Reading from the N-terminus, the 755-residue chain is DNA ligase 1 (755 aa).

The transit peptide at 1–44 directs the protein to the mitochondrion; that stretch reads MRRLLTGCLLSSARPLKSRLPLLMSSSLPSSAGKKPKQATLARF. N-acetylserine is present on Arg2. Polar residues predominate over residues 47 to 60; the sequence is SMKNKPTEGTPSPK. 2 disordered regions span residues 47–79 and 97–127; these read SMKN…GEEE and PSSM…QRLV. Phosphoserine is present on residues Ser58 and Ser75. Residues 102-114 are compositionally biased toward low complexity; the sequence is SNFSSIPSSAPSS. Ser119 and Ser123 each carry phosphoserine. Residues 309–318 form an interaction with target DNA region; the sequence is KLRIGLAEKT. Position 417 (Glu417) interacts with ATP. The N6-AMP-lysine intermediate role is filled by Lys419. 2 residues coordinate ATP: Arg424 and Arg440. Glu472 is a Mg(2+) binding site. The tract at residues 493–495 is interaction with target DNA; that stretch reads KRK. Glu571 lines the Mg(2+) pocket. ATP contacts are provided by Lys576, Arg590, and Lys596.

This sequence belongs to the ATP-dependent DNA ligase family. Requires Mg(2+) as cofactor.

Its subcellular location is the mitochondrion. The protein localises to the nucleus. The enzyme catalyses ATP + (deoxyribonucleotide)n-3'-hydroxyl + 5'-phospho-(deoxyribonucleotide)m = (deoxyribonucleotide)n+m + AMP + diphosphate.. DNA ligase that seals nicks in double-stranded DNA during DNA replication, DNA recombination and DNA repair. The mitochondrial form is required for mitochondrial DNA maintenance but is non-essential while the nuclear form is essential for cell viability. The protein is DNA ligase 1 (CDC9) of Saccharomyces cerevisiae (strain ATCC 204508 / S288c) (Baker's yeast).